The chain runs to 301 residues: GLABROUS1 enhancer-binding protein-like 2 (301 aa).

The interval 1–62 (MATPTELGFS…NTKMASPPSN (62 aa)) is disordered. The span at 44-54 (KKKKKKTKHNT) shows a compositional bias: basic residues. Positions 268-289 (LSNEWKALCVEELKLNINKLRF) are non-canonical leucine-zipper.

It belongs to the GeBP family. In terms of assembly, homo- and heterodimers. Interacts with GEBP, GPL1 and GPL3. As to expression, expressed in the apical meristem and young leaf primordia. Detected in the vascular tissues of cotyledons and leaves, in hydathodes and in the septun of siliques, but not in roots.

Its subcellular location is the nucleus. In terms of biological role, probable transcription factor. May play redundant roles with GEBP and GPL1 in cytokinin responses by regulating the transcript levels of type-A ARR response genes. Involved in stress responses. Plays a repressive role in cell expansion by counteracting the positive role of CPR5 in this process, but does not regulate cell proliferation or endoreduplication. This chain is GLABROUS1 enhancer-binding protein-like 2, found in Arabidopsis thaliana (Mouse-ear cress).